We begin with the raw amino-acid sequence, 386 residues long: O-methyltransferase 12 (386 aa).

5 residues coordinate S-adenosyl-L-homocysteine: Ser207, Gly231, Asp254, Asp274, and Lys288. Position 254 (Asp254) interacts with S-adenosyl-L-methionine. The active-site Proton acceptor is His292.

It belongs to the class I-like SAM-binding methyltransferase superfamily. Cation-independent O-methyltransferase family. As to quaternary structure, homodimer. As to expression, expressed at high levels in all tissues.

The enzyme catalyses 4-hydroxy-3,5-dimethoxyphenethylamine + S-adenosyl-L-methionine = mescaline + S-adenosyl-L-homocysteine + H(+). It catalyses the reaction dopamine + S-adenosyl-L-methionine = 4-methoxytyramine + S-adenosyl-L-homocysteine + H(+). It participates in aromatic compound metabolism. Its pathway is alkaloid biosynthesis. O-methyltransferase participating in the biosynthesis of natural products derived from phenylethylamine, including mescaline, a natural hallucinogen potentially used in psychotherapeutic treatments. Catalyzes the O-methylation of dopamine, 4-hydroxy-3,5-dimethoxyphenethylamine, 4,5-dihydroxy-3-methoxyphenethylamine and N-methyl-4,5-dihydroxy-3-methoxyphenethylamine. Also involved in the conversion of N-methyl-4-hydroxy-3,5-dimethoxyphenethylamine to N-methylmescaline. The chain is O-methyltransferase 12 from Lophophora williamsii (Peyote).